The primary structure comprises 335 residues: Ferredoxin--NADP reductase (335 aa).

Residues D35, Q43, Y48, A88, F122, D287, and S328 each coordinate FAD.

This sequence belongs to the ferredoxin--NADP reductase type 2 family. In terms of assembly, homodimer. FAD serves as cofactor.

It carries out the reaction 2 reduced [2Fe-2S]-[ferredoxin] + NADP(+) + H(+) = 2 oxidized [2Fe-2S]-[ferredoxin] + NADPH. The polypeptide is Ferredoxin--NADP reductase (Thermus thermophilus (strain ATCC BAA-163 / DSM 7039 / HB27)).